A 160-amino-acid polypeptide reads, in one-letter code: MKLQVLPLSQEAFCAYGDVIETQKRDFFHINNGLVERYHDLALVEILEQDRTLISINRAQPANLPLTIHELERHPLGTQAFIPMKGEVFVVVVALGDDKPDLSTLRAFITNGEQGVNYHRNVWHHPLFAWQRVTDFLTIDRGGSDNCDVESIPEQELCFA.

Belongs to the ureidoglycolate lyase family. In terms of assembly, homodimer. Ni(2+) serves as cofactor.

It catalyses the reaction (S)-ureidoglycolate = urea + glyoxylate. The protein operates within nitrogen metabolism; (S)-allantoin degradation. Its function is as follows. Catalyzes the catabolism of the allantoin degradation intermediate (S)-ureidoglycolate, generating urea and glyoxylate. Involved in the anaerobic utilization of allantoin as sole nitrogen source. Reinforces the induction of genes involved in the degradation of allantoin and glyoxylate by producing glyoxylate. This chain is Ureidoglycolate lyase, found in Escherichia coli O6:H1 (strain CFT073 / ATCC 700928 / UPEC).